The chain runs to 339 residues: Polyhydroxybutyrate depolymerase (339 aa).

An N-terminal signal peptide occupies residues 1–20 (MFDSVKIAWLVALGAAQVAA). The active site involves serine 39. A disulfide bridge connects residues cysteine 70 and cysteine 79. Residue aspartate 121 is part of the active site. N-linked (GlcNAc...) asparagine glycosylation is present at asparagine 144. Residue histidine 155 is part of the active site. 3 disulfides stabilise this stretch: cysteine 169–cysteine 180, cysteine 234–cysteine 241, and cysteine 250–cysteine 304. Residue tryptophan 307 participates in (3R)-hydroxybutanoate trimer binding.

This sequence belongs to the carbohydrate esterase 1 (CE1) family.

It localises to the secreted. The catalysed reaction is [(3R)-hydroxybutanoate](n) + H2O = [(3R)-hydroxybutanoate](n-1) + (R)-3-hydroxybutanoate + H(+). Its activity is regulated as follows. The enzyme is completely inhibited by dithiothreitol (DTT) and diisopropylfluorophosphate (DFP), and partially inhibited by HgCl(2) and by enzyme3-(p-nitrophenoxy)propane (EPNP). Activity is not affected by N-ethylmaleimide (NEM) or phenylmethylsulfonyl fluoride (PMSF). Its function is as follows. Esterase involved in the hydrolysis of polyhydroxybutyrate, a microbial polyester that can be produced from renewable resources. This Talaromyces funiculosus (Fruitlet core rot fungus) protein is Polyhydroxybutyrate depolymerase.